The following is a 136-amino-acid chain: Large ribosomal subunit protein uL16 (136 aa).

This sequence belongs to the universal ribosomal protein uL16 family. Part of the 50S ribosomal subunit.

Binds 23S rRNA and is also seen to make contacts with the A and possibly P site tRNAs. The protein is Large ribosomal subunit protein uL16 of Rickettsia canadensis (strain McKiel).